The primary structure comprises 224 residues: MNQNQDKGQGLLGRKVGMMRIFTDDGDSIPVTVLDVSNNRVTQIKTPDVDGYSAVQVAFGSRRASRVNKASAGHHAKAGVEAGTVLKEFRVAATAASELKVGDVIAASLFEVGQKVDVQGVTIGKGYAGTIKRHHFASGRATHGNSRSHNVPGSIGMAQDPGRVFPGKRMTGHLGDVARTMQNLEIARIDADRQLLLVKGAVPGAKNGQVIVSPAVKVKAKKGA.

Q159 carries the post-translational modification N5-methylglutamine.

This sequence belongs to the universal ribosomal protein uL3 family. As to quaternary structure, part of the 50S ribosomal subunit. Forms a cluster with proteins L14 and L19. Post-translationally, methylated by PrmB.

One of the primary rRNA binding proteins, it binds directly near the 3'-end of the 23S rRNA, where it nucleates assembly of the 50S subunit. This chain is Large ribosomal subunit protein uL3, found in Herminiimonas arsenicoxydans.